Consider the following 217-residue polypeptide: 2-phospho-L-lactate guanylyltransferase (217 aa).

Belongs to the CofC family. As to quaternary structure, homodimer.

It catalyses the reaction (2S)-2-phospholactate + GTP + H(+) = (2S)-lactyl-2-diphospho-5'-guanosine + diphosphate. Its pathway is cofactor biosynthesis; coenzyme F420 biosynthesis. Functionally, guanylyltransferase that catalyzes the activation of (2S)-2-phospholactate (2-PL) as (2S)-lactyl-2-diphospho-5'-guanosine, via the condensation of 2-PL with GTP. It is involved in the biosynthesis of coenzyme F420, a hydride carrier cofactor. The protein is 2-phospho-L-lactate guanylyltransferase of Halorubrum lacusprofundi (strain ATCC 49239 / DSM 5036 / JCM 8891 / ACAM 34).